A 238-amino-acid chain; its full sequence is Flagellar L-ring protein (238 aa).

The first 17 residues, 1 to 17, serve as a signal peptide directing secretion; that stretch reads MKRRLLAAGCAMLLLSG. Cys-18 is lipidated: N-palmitoyl cysteine. Cys-18 carries the S-diacylglycerol cysteine lipid modification. Positions 22-50 are disordered; it reads RQQPSPVPPVTQPQAYAEPEDTAANPGSL.

This sequence belongs to the FlgH family. As to quaternary structure, the basal body constitutes a major portion of the flagellar organelle and consists of four rings (L,P,S, and M) mounted on a central rod.

Its subcellular location is the cell outer membrane. It localises to the bacterial flagellum basal body. Functionally, assembles around the rod to form the L-ring and probably protects the motor/basal body from shearing forces during rotation. This chain is Flagellar L-ring protein, found in Nitratidesulfovibrio vulgaris (strain DSM 19637 / Miyazaki F) (Desulfovibrio vulgaris).